A 187-amino-acid polypeptide reads, in one-letter code: Large ribosomal subunit protein uL5 (187 aa).

It belongs to the universal ribosomal protein uL5 family. In terms of assembly, part of the 50S ribosomal subunit; part of the 5S rRNA/L5/L18/L25 subcomplex. Contacts the 5S rRNA and the P site tRNA. Forms a bridge to the 30S subunit in the 70S ribosome.

This is one of the proteins that bind and probably mediate the attachment of the 5S RNA into the large ribosomal subunit, where it forms part of the central protuberance. In the 70S ribosome it contacts protein S13 of the 30S subunit (bridge B1b), connecting the 2 subunits; this bridge is implicated in subunit movement. Contacts the P site tRNA; the 5S rRNA and some of its associated proteins might help stabilize positioning of ribosome-bound tRNAs. The chain is Large ribosomal subunit protein uL5 from Mycobacterium sp. (strain JLS).